A 429-amino-acid chain; its full sequence is 3-phosphoshikimate 1-carboxyvinyltransferase (429 aa).

Lys20, Ser21, and Arg25 together coordinate 3-phosphoshikimate. Lys20 contacts phosphoenolpyruvate. Positions 89 and 118 each coordinate phosphoenolpyruvate. Residues Ser164, Ser165, Gln166, Ser192, Asp311, and Lys338 each contribute to the 3-phosphoshikimate site. A phosphoenolpyruvate-binding site is contributed by Gln166. Asp311 serves as the catalytic Proton acceptor. Arg342 and Arg384 together coordinate phosphoenolpyruvate.

This sequence belongs to the EPSP synthase family. Monomer.

The protein resides in the cytoplasm. It catalyses the reaction 3-phosphoshikimate + phosphoenolpyruvate = 5-O-(1-carboxyvinyl)-3-phosphoshikimate + phosphate. Its pathway is metabolic intermediate biosynthesis; chorismate biosynthesis. In terms of biological role, catalyzes the transfer of the enolpyruvyl moiety of phosphoenolpyruvate (PEP) to the 5-hydroxyl of shikimate-3-phosphate (S3P) to produce enolpyruvyl shikimate-3-phosphate and inorganic phosphate. The sequence is that of 3-phosphoshikimate 1-carboxyvinyltransferase from Methanococcus maripaludis (strain C7 / ATCC BAA-1331).